A 151-amino-acid chain; its full sequence is Ribosome-binding factor A (151 aa).

A disordered region spans residues 120-151 (RSPKVVRDLDDTSSDDTSPDANTDTDKETDAE).

Belongs to the RbfA family. Monomer. Binds 30S ribosomal subunits, but not 50S ribosomal subunits or 70S ribosomes.

It is found in the cytoplasm. Its function is as follows. One of several proteins that assist in the late maturation steps of the functional core of the 30S ribosomal subunit. Associates with free 30S ribosomal subunits (but not with 30S subunits that are part of 70S ribosomes or polysomes). Required for efficient processing of 16S rRNA. May interact with the 5'-terminal helix region of 16S rRNA. The polypeptide is Ribosome-binding factor A (Xanthobacter autotrophicus (strain ATCC BAA-1158 / Py2)).